The following is a 387-amino-acid chain: Phosphoglycerate kinase (387 aa).

Substrate contacts are provided by residues 21–23 (DLN), R36, 59–62 (HLGR), R113, and R146. ATP is bound by residues K197, E314, and 340-343 (GGDT).

The protein belongs to the phosphoglycerate kinase family. In terms of assembly, monomer.

The protein resides in the cytoplasm. The catalysed reaction is (2R)-3-phosphoglycerate + ATP = (2R)-3-phospho-glyceroyl phosphate + ADP. It participates in carbohydrate degradation; glycolysis; pyruvate from D-glyceraldehyde 3-phosphate: step 2/5. In Aliivibrio fischeri (strain ATCC 700601 / ES114) (Vibrio fischeri), this protein is Phosphoglycerate kinase.